Consider the following 215-residue polypeptide: 3-demethoxyubiquinol 3-hydroxylase (215 aa).

Fe cation-binding residues include Glu64, Glu94, His97, Glu146, Glu178, and His181.

Belongs to the COQ7 family. Fe cation is required as a cofactor.

The protein localises to the cell membrane. The enzyme catalyses a 5-methoxy-2-methyl-3-(all-trans-polyprenyl)benzene-1,4-diol + AH2 + O2 = a 3-demethylubiquinol + A + H2O. It participates in cofactor biosynthesis; ubiquinone biosynthesis. Its function is as follows. Catalyzes the hydroxylation of 2-nonaprenyl-3-methyl-6-methoxy-1,4-benzoquinol during ubiquinone biosynthesis. This Pseudomonas savastanoi pv. phaseolicola (strain 1448A / Race 6) (Pseudomonas syringae pv. phaseolicola (strain 1448A / Race 6)) protein is 3-demethoxyubiquinol 3-hydroxylase.